The following is a 206-amino-acid chain: Small ribosomal subunit protein uS4 (206 aa).

In terms of domain architecture, S4 RNA-binding spans 96–161 (RRLDNVVYRM…QGRIQAALAL (66 aa)).

Belongs to the universal ribosomal protein uS4 family. In terms of assembly, part of the 30S ribosomal subunit. Contacts protein S5. The interaction surface between S4 and S5 is involved in control of translational fidelity.

In terms of biological role, one of the primary rRNA binding proteins, it binds directly to 16S rRNA where it nucleates assembly of the body of the 30S subunit. With S5 and S12 plays an important role in translational accuracy. The polypeptide is Small ribosomal subunit protein uS4 (Legionella pneumophila (strain Paris)).